The following is a 177-amino-acid chain: Ribosome rescue factor SmrB (177 aa).

Residues 98–173 (LDMHGMKQDE…GAGAILVLLS (76 aa)) form the Smr domain.

It belongs to the SmrB family. In terms of assembly, associates with collided ribosomes, but not with correctly translating polysomes.

Its function is as follows. Acts as a ribosome collision sensor. Detects stalled/collided disomes (pairs of ribosomes where the leading ribosome is stalled and a second ribosome has collided with it) and endonucleolytically cleaves mRNA at the 5' boundary of the stalled ribosome. Stalled/collided disomes form a new interface (primarily via the 30S subunits) that binds SmrB. Cleaved mRNA becomes available for tmRNA ligation, leading to ribosomal subunit dissociation and rescue of stalled ribosomes. This Aliivibrio fischeri (strain ATCC 700601 / ES114) (Vibrio fischeri) protein is Ribosome rescue factor SmrB.